A 98-amino-acid polypeptide reads, in one-letter code: Cytochrome b (98 aa).

The next 3 helical transmembrane spans lie at 1-18 (LLGL…FLAM), 42-63 (WLIR…YLHV), and 78-98 (WNIG…GYVL). Heme b-binding residues include histidine 48 and histidine 62.

This sequence belongs to the cytochrome b family. The cytochrome bc1 complex contains 3 respiratory subunits (MT-CYB, CYC1 and UQCRFS1), 2 core proteins (UQCRC1 and UQCRC2) and probably 6 low-molecular weight proteins. Requires heme b as cofactor.

It is found in the mitochondrion inner membrane. Component of the ubiquinol-cytochrome c reductase complex (complex III or cytochrome b-c1 complex) that is part of the mitochondrial respiratory chain. The b-c1 complex mediates electron transfer from ubiquinol to cytochrome c. Contributes to the generation of a proton gradient across the mitochondrial membrane that is then used for ATP synthesis. In Scaphirhynchus platorynchus (Shovelnose sturgeon), this protein is Cytochrome b (mt-cyb).